The following is a 175-amino-acid chain: Large ribosomal subunit protein uL15 (175 aa).

Over residues 1–13 (MTIKLNELRDNNG) the composition is skewed to basic and acidic residues. 2 disordered regions span residues 1-44 (MTIK…KARS) and 150-175 (VELP…AKNA). Gly residues predominate over residues 23–37 (RGIGSGKGKTAGRGQ).

The protein belongs to the universal ribosomal protein uL15 family. Part of the 50S ribosomal subunit.

Its function is as follows. Binds to the 23S rRNA. This chain is Large ribosomal subunit protein uL15, found in Sphingopyxis alaskensis (strain DSM 13593 / LMG 18877 / RB2256) (Sphingomonas alaskensis).